Reading from the N-terminus, the 109-residue chain is UPF0122 protein BH2485 (109 aa).

It belongs to the UPF0122 family.

Its function is as follows. Might take part in the signal recognition particle (SRP) pathway. This is inferred from the conservation of its genetic proximity to ftsY/ffh. May be a regulatory protein. The polypeptide is UPF0122 protein BH2485 (Halalkalibacterium halodurans (strain ATCC BAA-125 / DSM 18197 / FERM 7344 / JCM 9153 / C-125) (Bacillus halodurans)).